Reading from the N-terminus, the 485-residue chain is Probable cobyric acid synthase (485 aa).

One can recognise a GATase cobBQ-type domain in the interval 250–435; sequence EIEVAVIRLP…LHGLFDNRNI (186 aa). The active-site Nucleophile is the Cys328. His427 is a catalytic residue.

This sequence belongs to the CobB/CobQ family. CobQ subfamily.

Its pathway is cofactor biosynthesis; adenosylcobalamin biosynthesis. Its function is as follows. Catalyzes amidations at positions B, D, E, and G on adenosylcobyrinic A,C-diamide. NH(2) groups are provided by glutamine, and one molecule of ATP is hydrogenolyzed for each amidation. The protein is Probable cobyric acid synthase of Methanosarcina mazei (strain ATCC BAA-159 / DSM 3647 / Goe1 / Go1 / JCM 11833 / OCM 88) (Methanosarcina frisia).